A 275-amino-acid polypeptide reads, in one-letter code: 2,3,4,5-tetrahydropyridine-2,6-dicarboxylate N-succinyltransferase (275 aa).

Substrate contacts are provided by Arg104 and Asp141.

The protein belongs to the transferase hexapeptide repeat family. Homotrimer.

The protein resides in the cytoplasm. The catalysed reaction is (S)-2,3,4,5-tetrahydrodipicolinate + succinyl-CoA + H2O = (S)-2-succinylamino-6-oxoheptanedioate + CoA. It functions in the pathway amino-acid biosynthesis; L-lysine biosynthesis via DAP pathway; LL-2,6-diaminopimelate from (S)-tetrahydrodipicolinate (succinylase route): step 1/3. The sequence is that of 2,3,4,5-tetrahydropyridine-2,6-dicarboxylate N-succinyltransferase from Haemophilus influenzae (strain 86-028NP).